A 2261-amino-acid chain; its full sequence is Phospholipid-transporting ATPase ABCA1 (2261 aa).

A lipid anchor (S-palmitoyl cysteine) is attached at cysteine 3. Asparagine 14 is a glycosylation site (N-linked (GlcNAc...) asparagine). A helical transmembrane segment spans residues threonine 22–valine 42. Cysteine 23 carries S-palmitoyl cysteine lipidation. The Extracellular segment spans residues arginine 43 to serine 639. The segment at tryptophan 69–proline 80 is annulus domain 1. Cysteine 75 and cysteine 309 are joined by a disulfide. Asparagine 98, asparagine 151, asparagine 161, asparagine 196, asparagine 244, asparagine 292, asparagine 337, and asparagine 349 each carry an N-linked (GlcNAc...) asparagine glycan. The segment at serine 368 to leucine 379 is annulus domain 2. N-linked (GlcNAc...) asparagine glycans are attached at residues asparagine 400, asparagine 478, asparagine 489, and asparagine 521. A gateway domain region spans residues glutamate 564–alanine 594. The next 5 membrane-spanning stretches (helical) occupy residues methionine 640–valine 660, phenylalanine 683–isoleucine 703, serine 716–isoleucine 736, leucine 745–valine 765, and isoleucine 777–phenylalanine 797. The N-linked (GlcNAc...) asparagine glycan is linked to asparagine 820. A helical membrane pass occupies residues methionine 827–proline 847. Residues valine 899 to valine 1131 form the ABC transporter 1 domain. Glycine 933 to threonine 940 serves as a coordination point for ATP. A helical transmembrane segment spans residues leucine 1041–aspartate 1057. At serine 1042 the chain carries Phosphoserine; by PKA. 2 S-palmitoyl cysteine lipidation sites follow: cysteine 1110 and cysteine 1111. Residues asparagine 1144 and asparagine 1294 are each glycosylated (N-linked (GlcNAc...) asparagine). The disordered stretch occupies residues arginine 1283 to aspartate 1312. Residues glutamate 1287–aspartate 1299 show a composition bias toward acidic residues. Residue serine 1296 is modified to Phosphoserine. The helical transmembrane segment at isoleucine 1351–phenylalanine 1371 threads the bilayer. Residues glycine 1372 to leucine 1656 are Extracellular-facing. The N-linked (GlcNAc...) asparagine glycan is linked to asparagine 1453. Cysteines 1463 and 1477 form a disulfide. N-linked (GlcNAc...) asparagine glycans are attached at residues asparagine 1504 and asparagine 1637. 6 consecutive transmembrane segments (helical) span residues valine 1657–isoleucine 1677, phenylalanine 1703–cysteine 1723, leucine 1735–proline 1755, valine 1768–leucine 1788, isoleucine 1802–methionine 1822, and asparagine 1852–tyrosine 1872. An ABC transporter 2 domain is found at leucine 1912–arginine 2144. An ATP-binding site is contributed by glycine 1946–serine 1953. Asparagine 2044 carries N-linked (GlcNAc...) asparagine glycosylation. Serine 2054 is subject to Phosphoserine; by PKA. Asparagine 2238 carries an N-linked (GlcNAc...) asparagine glycan.

The protein belongs to the ABC transporter superfamily. ABCA family. In terms of assembly, interacts with MEGF10. May interact with APOE1; functionally associated with APOE1 in the biogenesis of HDLs. Interacts with ABCA8; this interaction potentiates cholesterol efflux. Interacts with ABCA12 and NR1H2; this interaction is required for ABCA1 localization to the cell surface and is necessary for its normal activity and stability. Post-translationally, phosphorylation on Ser-2054 regulates phospholipid efflux. In terms of processing, palmitoylated by ZDHHC8. Palmitoylation is essential for localization to the plasma membrane. Widely expressed, but most abundant in macrophages.

It localises to the cell membrane. Its subcellular location is the endosome. It carries out the reaction ATP + H2O + phospholipidSide 1 = ADP + phosphate + phospholipidSide 2.. The enzyme catalyses a 1,2-diacyl-sn-glycero-3-phosphocholine(out) + ATP + H2O = a 1,2-diacyl-sn-glycero-3-phosphocholine(in) + ADP + phosphate + H(+). It catalyses the reaction a 1,2-diacyl-sn-glycero-3-phospho-L-serine(out) + ATP + H2O = a 1,2-diacyl-sn-glycero-3-phospho-L-serine(in) + ADP + phosphate + H(+). The catalysed reaction is a sphingomyelin(in) + ATP + H2O = a sphingomyelin(out) + ADP + phosphate + H(+). It carries out the reaction cholesterol(in) + ATP + H2O = cholesterol(out) + ADP + phosphate + H(+). With respect to regulation, ATPase activity is decreased by cholesterol and ceramide. ATPase activity is stimulated by phosphatidylcholine and to a lesser degree by phosphatidylserine and sphingomyelin. Phospholipid translocase activity is highly reduced by berylium fluoride and aluminum flouride and reduced by N-ethylmaleimide. Its function is as follows. Catalyzes the translocation of specific phospholipids from the cytoplasmic to the extracellular/lumenal leaflet of membrane coupled to the hydrolysis of ATP. Thereby, participates in phospholipid transfer to apolipoproteins to form nascent high density lipoproteins/HDLs. Transports preferentially phosphatidylcholine over phosphatidylserine. May play a similar role in the efflux of intracellular cholesterol to apolipoproteins and the formation of nascent high density lipoproteins/HDLs. Translocates phospholipids from the outer face of the plasma membrane and forces it through its gateway and annulus into an elongated hydrophobic tunnel in its extracellular domain. This Homo sapiens (Human) protein is Phospholipid-transporting ATPase ABCA1.